Reading from the N-terminus, the 384-residue chain is Early estrogen-induced gene 1 protein (384 aa).

Positions 2-145 constitute a C2 NT-type domain; the sequence is AFLMKKKKFK…ILKVTIGMFL (144 aa). Positions 129-138 are required for interaction with TNFRSF11A/RANK; it reads NTRQDNSILK. A disordered region spans residues 173–315; that stretch reads LTCKGGGTSS…RRKKDSVESH (143 aa). Positions 183–193 are enriched in low complexity; the sequence is GGSSTNSLTGS. The span at 227–254 shows a compositional bias: polar residues; sequence SRNSSYASQQSKISGYSTEHSRSSSLSD. Composition is skewed to basic and acidic residues over residues 280–292 and 299–315; these read GSER…EKPP and HLSD…VESH.

It belongs to the EEIG family. As to quaternary structure, part of a complex composed of EEIG1, TNFRSF11A/RANK, PLCG2, GAB2, TEC and BTK; complex formation increases in the presence of TNFSF11/RANKL. Interacts with PRDM1/BLIMP1; following TNFSF11/RANKL stimulation in bone marrow-derived macrophages, the interaction promotes the binding of PRDM1/BLIMP1 to the gene promoter of IRF8.

The protein localises to the nucleus. It is found in the cytoplasm. Its subcellular location is the membrane raft. In terms of biological role, key component of TNFSF11/RANKL- and TNF-induced osteoclastogenesis pathways, thereby mediates bone resorption in pathological bone loss conditions. Required for TNFSF11/RANKL-induced osteoclastogenesis via its interaction with TNFRSF11A/RANK, thereby facilitates the downsteam transcription of NFATC1 and activation of PLCG2. Facilitates recruitment of the transcriptional repressor PRDM1/BLIMP1 to the promoter of the anti-osteoclastogenesis gene IRF8, thereby resulting in transcription of osteoclast differentiation factors. May play a role in estrogen action. The chain is Early estrogen-induced gene 1 protein from Homo sapiens (Human).